A 907-amino-acid polypeptide reads, in one-letter code: Lipoxygenase 1, chloroplastic (907 aa).

A chloroplast-targeting transit peptide spans 1–49; the sequence is MALAKQIMGASLMDQKTSVFGSNLCLNHVLVNKHRLRLRKTRKNGSMVV. The region spanning 85-209 is the PLAT domain; the sequence is DFFKDTIFRK…DLPNPRIFFT (125 aa). The Lipoxygenase domain maps to 212 to 907; sequence PYLPDETPVG…CRGVPNSISI (696 aa). H567, H572, H758, N762, and I907 together coordinate Fe cation.

It belongs to the lipoxygenase family. Fe cation serves as cofactor. As to expression, confined to glandular trichomes in flowers, and, at low levels, in leaves.

It is found in the plastid. The protein localises to the chloroplast. The catalysed reaction is (9Z,12Z,15Z)-octadecatrienoate + O2 = 13-hydroperoxy-(9Z,11E,15Z)-octadecatrienoate. It functions in the pathway lipid metabolism; oxylipin biosynthesis. The protein operates within isoprenoid biosynthesis. Component of the monoterpenoid pyrethrins biosynthesis; pyrethrins are widely used plant-derived pesticide. Plant lipoxygenases may be involved in a number of diverse aspects of plant physiology including growth and development, pest resistance, and senescence or responses to wounding. Catalyzes the hydroperoxidation of lipids containing a cis,cis-1,4-pentadiene structure. Mediates the peroxidation of linolenic acid leading to the production of 13-hydroperoxylinolenic acid. The polypeptide is Lipoxygenase 1, chloroplastic (Tanacetum cinerariifolium (Dalmatian daisy)).